Reading from the N-terminus, the 399-residue chain is Cell division protein DivIB (399 aa).

2 disordered regions span residues 1–23 (MSKDKKNEDKETLEELKELSEWQ) and 35–119 (EEEA…ATKE). Residues 1–133 (MSKDKKNEDK…AKIPGIHILR (133 aa)) are Cytoplasmic-facing. 2 stretches are compositionally biased toward basic and acidic residues: residues 35–65 (EEEAALAEEKEKERQARMGEESEKSEDKQDQ) and 75–119 (ESAK…ATKE). Residues 134–154 (AFTILFPSLLLLFVSAYLLSP) traverse the membrane as a helical segment. At 155–399 (YATMKDIRVE…NQTTQRSSRR (245 aa)) the chain is on the extracellular side. The POTRA domain maps to 156-226 (ATMKDIRVEG…TKFTIKVKEY (71 aa)). Positions 364-388 (KAKQEAKEAEKKQEEEQKKQEEESN) are enriched in basic and acidic residues. A disordered region spans residues 364-399 (KAKQEAKEAEKKQEEEQKKQEEESNRNQTTQRSSRR). Over residues 389 to 399 (RNQTTQRSSRR) the composition is skewed to polar residues.

Belongs to the FtsQ/DivIB family. DivIB subfamily.

The protein localises to the cell membrane. Cell division protein that may be involved in stabilizing or promoting the assembly of the division complex. This chain is Cell division protein DivIB, found in Streptococcus pneumoniae serotype 4 (strain ATCC BAA-334 / TIGR4).